The primary structure comprises 92 residues: Small ribosomal subunit protein bS20 (92 aa).

This sequence belongs to the bacterial ribosomal protein bS20 family.

Binds directly to 16S ribosomal RNA. The chain is Small ribosomal subunit protein bS20 from Rickettsia conorii (strain ATCC VR-613 / Malish 7).